A 420-amino-acid chain; its full sequence is Transcriptional adapter 2-beta (420 aa).

The ZZ-type zinc finger occupies 4–59; sequence LGKKYCVYCLAEVSPLRFRCTECQDIELCPECFSAGAEIGHHRRYHGYQLVDGGRF. Residues Cys9, Cys12, Cys23, Cys26, Cys32, Cys35, His45, and His49 each coordinate Zn(2+). Residues 65-118 form the SANT domain; it reads EAEGGWTSREEQLLLDAIEQFGFGNWEDMAAHVGASRTPQEVMEHYVSMYIHGN. The tract at residues 305-335 is disordered; it reads SAEYEAARHKREKRKENKNLAGSKRGKEDGK.

In terms of assembly, interacts with GCN5L2, SMARCA4, SMARCE1 and PAX5. Component of the TFTC-HAT complex.

It localises to the nucleus. Coactivates PAX5-dependent transcription together with either SMARCA4 or GCN5L2. This Homo sapiens (Human) protein is Transcriptional adapter 2-beta (TADA2B).